Reading from the N-terminus, the 154-residue chain is MSETAPKPETVEIYTDGACSGNPGPGGWGAILRFKGIEKELKGGESPTTNNRMEMMAVLVALNTLTRSCAVDVYTDSEYVKKGMTEWLRGWKARGWKTADKKPVKNDDLWKALDEAAARHKVSWHWVKGHAGHPENERADALAREGIADLRART.

The 142-residue stretch at 7 to 148 folds into the RNase H type-1 domain; the sequence is KPETVEIYTD…ADALAREGIA (142 aa). 4 residues coordinate Mg(2+): Asp-16, Glu-54, Asp-76, and Asp-140.

The protein belongs to the RNase H family. Monomer. It depends on Mg(2+) as a cofactor.

The protein resides in the cytoplasm. It catalyses the reaction Endonucleolytic cleavage to 5'-phosphomonoester.. Functionally, endonuclease that specifically degrades the RNA of RNA-DNA hybrids. The protein is Ribonuclease H of Paramagnetospirillum magneticum (strain ATCC 700264 / AMB-1) (Magnetospirillum magneticum).